The following is a 390-amino-acid chain: DNA polymerase IV (390 aa).

The region spanning 6 to 187 (VMHVDLDAFF…LDIAVMPGIG (182 aa)) is the UmuC domain. Residues aspartate 10 and aspartate 105 each coordinate Mg(2+). Residue glutamate 106 is part of the active site.

Belongs to the DNA polymerase type-Y family. Monomer. It depends on Mg(2+) as a cofactor.

The protein localises to the cytoplasm. The catalysed reaction is DNA(n) + a 2'-deoxyribonucleoside 5'-triphosphate = DNA(n+1) + diphosphate. Functionally, poorly processive, error-prone DNA polymerase involved in untargeted mutagenesis. Copies undamaged DNA at stalled replication forks, which arise in vivo from mismatched or misaligned primer ends. These misaligned primers can be extended by PolIV. Exhibits no 3'-5' exonuclease (proofreading) activity. May be involved in translesional synthesis, in conjunction with the beta clamp from PolIII. The protein is DNA polymerase IV of Dehalococcoides mccartyi (strain ATCC BAA-2100 / JCM 16839 / KCTC 5957 / BAV1).